Consider the following 196-residue polypeptide: [1-hydroxy-2-(trimethylamino)ethyl]phosphonate dioxygenase (glycine-betaine-forming) (196 aa).

Residue Y30 coordinates [(1R)-1-hydroxy-2-(trimethylamino)ethyl]phosphonate. Residues Y30, H40, H64, and D65 each contribute to the Fe cation site. One can recognise an HD domain in the interval 37–156 (MAEHMLQGAT…VAEFEKNPNL (120 aa)). H68, H86, H109, K113, S131, S134, and R163 together coordinate [(1R)-1-hydroxy-2-(trimethylamino)ethyl]phosphonate. H86 and H109 together coordinate Fe cation. D166 contacts Fe cation.

Requires Fe cation as cofactor.

The enzyme catalyses [(1R)-1-hydroxy-2-(trimethylamino)ethyl]phosphonate + O2 = glycine betaine + phosphate + 2 H(+). In terms of biological role, involved in the degradation of the naturally occurring organophosphonate 2-(trimethylammonio)ethylphosphonate (TMAEP). Catalyzes the O(2)-dependent cleavage of (R)-1-hydroxy-2-(trimethylammonio)ethylphosphonate (OH-TMAEP) to yield glycine betaine and phosphate. Is highly specific for its N-trimethylated substrate. The protein is [1-hydroxy-2-(trimethylamino)ethyl]phosphonate dioxygenase (glycine-betaine-forming) of Leisingera caerulea (Phaeobacter caeruleus).